The chain runs to 226 residues: Urease accessory protein UreF (226 aa).

This sequence belongs to the UreF family. As to quaternary structure, ureD, UreF and UreG form a complex that acts as a GTP-hydrolysis-dependent molecular chaperone, activating the urease apoprotein by helping to assemble the nickel containing metallocenter of UreC. The UreE protein probably delivers the nickel.

It localises to the cytoplasm. Functionally, required for maturation of urease via the functional incorporation of the urease nickel metallocenter. This Burkholderia ambifaria (strain MC40-6) protein is Urease accessory protein UreF.